Consider the following 1891-residue polypeptide: TATA-binding protein-associated factor mot1 (1891 aa).

One copy of the HEAT 1 repeat lies at 30-68 (PDELFNLLGRILPYLRSKSWDTRAAAAKAIGLIVANADT). Disordered regions lie at residues 184-216 (FVASREHSIQGTSQPLASPIEPANGEESGLSKR), 241-283 (LSSR…LDRS), and 295-316 (FKGASVPENPLLQPESTEEGPN). Over residues 264-275 (ENGEERNGDSKP) the composition is skewed to basic and acidic residues. 2 HEAT repeats span residues 473 to 511 (SKLMDGVLEAVMKGLGDYDDDVRAVSAATLVPIAEEFVK) and 569 to 606 (SSFGKLVPRLYPFLRHTITSVRSAVLRALMTFLQLEGE). The segment covering 699-710 (SAAAPARSSPAS) has biased composition (low complexity). A disordered region spans residues 699–740 (SAAAPARSSPASNTPEGTKGRRRKSEKKEAPPPSAHNVDGHM). 4 HEAT repeats span residues 957 to 996 (PKKPSHIIKGMMDSIKKEENAELQQRSATAITSLVEYYTT), 1139 to 1177 (YPWVVDLLPLVVKALQCKLSVIRYAAAKCFATICSVITV), 1181 to 1216 (TMLVEKVLPMINDALDVHHRQGAVECIYHLIHVMED), and 1219 to 1257 (LPYVIFLVVPVLGRMSDSDNEVRLLATTSFATLVKLVPL). A Helicase ATP-binding domain is found at 1316–1489 (AFLNRYNLHG…WSLFDFLMPG (174 aa)). 1329 to 1336 (DDMGLGKT) contacts ATP. A DEAH box motif is present at residues 1440–1443 (DEGH). The stretch at 1526–1565 (EALHKQVLPFLLRRLKEEVLNDLPPKIIQNYYCDPSELQR) is one HEAT 8 repeat. Residues 1663–1813 (DLSGASYVSP…STVVNQQNAG (151 aa)) enclose the Helicase C-terminal domain.

This sequence belongs to the SNF2/RAD54 helicase family. In terms of assembly, forms the NCT transcriptional regulatory complex with nctA and nctB.

Its subcellular location is the nucleus. Functionally, regulates transcription in association with TATA binding protein (TBP). Removes TBP from the TATA box via its C-terminal ATPase activity. Both transcription activation and repression require its ATPase activity. Part of the NCT transcriptional regulatory complex that acts as a key regulator of ergosterol biosynthesis and the azole exporter cdr1B. The NCT complex binds the promoters of genes linked to azole susceptibility, and especially represses the expression of cdr1B transporter. The protein is TATA-binding protein-associated factor mot1 of Aspergillus fumigatus (strain CBS 144.89 / FGSC A1163 / CEA10) (Neosartorya fumigata).